The sequence spans 435 residues: ATP-dependent protease ATPase subunit HslU (435 aa).

ATP is bound by residues Val-18, 60–65 (GVGKTE), Asp-248, Glu-313, and Arg-385.

The protein belongs to the ClpX chaperone family. HslU subfamily. In terms of assembly, a double ring-shaped homohexamer of HslV is capped on each side by a ring-shaped HslU homohexamer. The assembly of the HslU/HslV complex is dependent on binding of ATP.

The protein localises to the cytoplasm. ATPase subunit of a proteasome-like degradation complex; this subunit has chaperone activity. The binding of ATP and its subsequent hydrolysis by HslU are essential for unfolding of protein substrates subsequently hydrolyzed by HslV. HslU recognizes the N-terminal part of its protein substrates and unfolds these before they are guided to HslV for hydrolysis. This is ATP-dependent protease ATPase subunit HslU from Xanthobacter autotrophicus (strain ATCC BAA-1158 / Py2).